The sequence spans 429 residues: Ribosomal RNA small subunit methyltransferase B (429 aa).

S-adenosyl-L-methionine contacts are provided by residues 254 to 260, Asp-277, Asp-303, and Asp-322; that span reads CAAPGGK. Catalysis depends on Cys-375, which acts as the Nucleophile.

It belongs to the class I-like SAM-binding methyltransferase superfamily. RsmB/NOP family.

The protein localises to the cytoplasm. It catalyses the reaction cytidine(967) in 16S rRNA + S-adenosyl-L-methionine = 5-methylcytidine(967) in 16S rRNA + S-adenosyl-L-homocysteine + H(+). Specifically methylates the cytosine at position 967 (m5C967) of 16S rRNA. In Shigella boydii serotype 4 (strain Sb227), this protein is Ribosomal RNA small subunit methyltransferase B.